We begin with the raw amino-acid sequence, 103 residues long: Stefin-2 (103 aa).

Positions Gln-52–Gly-56 match the Secondary area of contact motif.

Belongs to the cystatin family.

The protein resides in the cytoplasm. In terms of biological role, this is an intracellular thiol proteinase inhibitor. This Mus musculus (Mouse) protein is Stefin-2 (Stfa2).